The following is a 311-amino-acid chain: Porphobilinogen deaminase (311 aa).

At C241 the chain carries S-(dipyrrolylmethanemethyl)cysteine.

It belongs to the HMBS family. In terms of assembly, monomer. Requires dipyrromethane as cofactor.

The enzyme catalyses 4 porphobilinogen + H2O = hydroxymethylbilane + 4 NH4(+). Its pathway is porphyrin-containing compound metabolism; protoporphyrin-IX biosynthesis; coproporphyrinogen-III from 5-aminolevulinate: step 2/4. Tetrapolymerization of the monopyrrole PBG into the hydroxymethylbilane pre-uroporphyrinogen in several discrete steps. The chain is Porphobilinogen deaminase from Geobacillus sp. (strain WCH70).